The chain runs to 487 residues: Aspyridones efflux protein apdF (487 aa).

Residues 1-21 (MSSVRESSKDESIVHPPKAPE) show a composition bias toward basic and acidic residues. Residues 1-25 (MSSVRESSKDESIVHPPKAPESEPF) form a disordered region. Residues 35–55 (VALGAGGVLFCTFGYVNAFGV) traverse the membrane as a helical segment. Asparagine 67 carries N-linked (GlcNAc...) asparagine glycosylation. 8 consecutive transmembrane segments (helical) span residues 75-95 (WIGS…GPLF), 99-119 (GAKV…MTSL), 126-146 (FFLA…APAL), 159-179 (AAMG…PIAL), 191-211 (WAVR…VLGI), 234-254 (VATL…FFYL), 262-282 (GMST…SFFG), and 293-313 (IGPY…TFCW). The N-linked (GlcNAc...) asparagine glycan is linked to asparagine 319. A run of 3 helical transmembrane segments spans residues 322–342 (IIVF…ITPA), 354–374 (IGTY…IGPP), and 385–405 (GFLQ…VLAF).

The protein belongs to the major facilitator superfamily. Monocarboxylate porter (TC 2.A.1.13) family.

The protein localises to the cell membrane. In terms of biological role, efflux pump that may be involved in the secretion of aspyridones. This Emericella nidulans (strain FGSC A4 / ATCC 38163 / CBS 112.46 / NRRL 194 / M139) (Aspergillus nidulans) protein is Aspyridones efflux protein apdF.